A 147-amino-acid polypeptide reads, in one-letter code: Sec-independent protein translocase protein TatB (147 aa).

Residues 2–22 (FSSIGWPEIFTVLILGLIIIG) traverse the membrane as a helical segment. A disordered region spans residues 96–147 (FDPKKIMASGTEGEAYRERGINPQPAGDSASPQTPSNKESQPKAGFSWDDIT). Residues 125–134 (ASPQTPSNKE) show a composition bias toward polar residues.

The protein belongs to the TatB family. The Tat system comprises two distinct complexes: a TatABC complex, containing multiple copies of TatA, TatB and TatC subunits, and a separate TatA complex, containing only TatA subunits. Substrates initially bind to the TatABC complex, which probably triggers association of the separate TatA complex to form the active translocon.

It is found in the cell membrane. Functionally, part of the twin-arginine translocation (Tat) system that transports large folded proteins containing a characteristic twin-arginine motif in their signal peptide across membranes. Together with TatC, TatB is part of a receptor directly interacting with Tat signal peptides. TatB may form an oligomeric binding site that transiently accommodates folded Tat precursor proteins before their translocation. The sequence is that of Sec-independent protein translocase protein TatB from Corynebacterium diphtheriae (strain ATCC 700971 / NCTC 13129 / Biotype gravis).